Reading from the N-terminus, the 49-residue chain is DNA-directed RNA polymerase subunit Rpo12 (49 aa).

C11, C27, and C30 together coordinate Zn(2+).

It belongs to the archaeal Rpo12/eukaryotic RPC10 RNA polymerase subunit family. In terms of assembly, part of the RNA polymerase complex. It depends on Zn(2+) as a cofactor.

The protein resides in the cytoplasm. It localises to the chromosome. It carries out the reaction RNA(n) + a ribonucleoside 5'-triphosphate = RNA(n+1) + diphosphate. Functionally, DNA-dependent RNA polymerase (RNAP) catalyzes the transcription of DNA into RNA using the four ribonucleoside triphosphates as substrates. The chain is DNA-directed RNA polymerase subunit Rpo12 from Thermococcus kodakarensis (strain ATCC BAA-918 / JCM 12380 / KOD1) (Pyrococcus kodakaraensis (strain KOD1)).